The following is a 345-amino-acid chain: uncharacterized protein (345 aa).

Disordered stretches follow at residues 1–24 and 296–345; these read MGLE…ENRK and MTAH…LNES. Positions 304–323 are enriched in acidic residues; it reads SDYDNDDDTDGIINETDYEL. Over residues 324–345 the composition is skewed to polar residues; that stretch reads DTSQSEFATLTTSSNKSILNES.

This is an uncharacterized protein from Schizosaccharomyces pombe (strain 972 / ATCC 24843) (Fission yeast).